The sequence spans 205 residues: Putative 3-methyladenine DNA glycosylase (205 aa).

The protein belongs to the DNA glycosylase MPG family.

This chain is Putative 3-methyladenine DNA glycosylase, found in Staphylococcus epidermidis (strain ATCC 35984 / DSM 28319 / BCRC 17069 / CCUG 31568 / BM 3577 / RP62A).